We begin with the raw amino-acid sequence, 190 residues long: Transcription antitermination protein NusB (190 aa).

Residues 135–190 (APAPESVAEEADEESSDSAAAASEPTDEGDVSDSPDSSGASDEPAAPSAEIQPTVD) form a disordered region. Residues 141 to 150 (VAEEADEESS) show a composition bias toward acidic residues.

The protein belongs to the NusB family.

Functionally, involved in transcription antitermination. Required for transcription of ribosomal RNA (rRNA) genes. Binds specifically to the boxA antiterminator sequence of the ribosomal RNA (rrn) operons. This Bifidobacterium longum (strain DJO10A) protein is Transcription antitermination protein NusB.